A 128-amino-acid polypeptide reads, in one-letter code: Ribosome-binding factor A (128 aa).

Belongs to the RbfA family. As to quaternary structure, monomer. Binds 30S ribosomal subunits, but not 50S ribosomal subunits or 70S ribosomes.

It is found in the cytoplasm. Functionally, one of several proteins that assist in the late maturation steps of the functional core of the 30S ribosomal subunit. Associates with free 30S ribosomal subunits (but not with 30S subunits that are part of 70S ribosomes or polysomes). Required for efficient processing of 16S rRNA. May interact with the 5'-terminal helix region of 16S rRNA. The chain is Ribosome-binding factor A from Microcystis aeruginosa (strain NIES-843 / IAM M-2473).